Consider the following 217-residue polypeptide: Meiotic expression up-regulated protein 29 (217 aa).

An N-terminal signal peptide occupies residues 1–21 (MFVVKTAVLLFFALFIGNTYA). Over 22–133 (YTYSLDRIQA…SGVLLHRPWK (112 aa)) the chain is Extracellular. A glycan (N-linked (GlcNAc...) asparagine) is linked at Asn84. The helical transmembrane segment at 134–154 (LFSLKPFTAAFVLLLAASYLA) threads the bilayer. Topologically, residues 155 to 217 (TACFRMLGYL…VPVPVLDESV (63 aa)) are cytoplasmic.

Its subcellular location is the membrane. This is Meiotic expression up-regulated protein 29 (meu29) from Schizosaccharomyces pombe (strain 972 / ATCC 24843) (Fission yeast).